Consider the following 469-residue polypeptide: Neuraminidase (469 aa).

The Intravirion segment spans residues 1 to 9; it reads MNPNQKIIT. A helical transmembrane segment spans residues 10-30; it reads IGSVSLTIATICFLMQIAILV. Residues 11-33 form an involved in apical transport and lipid raft association region; that stretch reads GSVSLTIATICFLMQIAILVTTV. Over 31 to 469 the chain is Virion surface; the sequence is TTVTLHFKQY…DGADINLMPI (439 aa). The tract at residues 36 to 88 is hypervariable stalk region; it reads HFKQYECDSPANNQVMPCEPIIIERNITEIVYLTNTTIEKEICPKLVEYRNWS. N-linked (GlcNAc...) asparagine; by host glycans are attached at residues asparagine 61, asparagine 70, and asparagine 86. Residues 91 to 469 form a head of neuraminidase region; that stretch reads QCKITGFAPF…DGADINLMPI (379 aa). 8 disulfides stabilise this stretch: cysteine 92–cysteine 417, cysteine 124–cysteine 129, cysteine 183–cysteine 230, cysteine 232–cysteine 237, cysteine 278–cysteine 291, cysteine 280–cysteine 289, cysteine 318–cysteine 337, and cysteine 421–cysteine 447. Arginine 118 is a substrate binding site. Asparagine 146 is a glycosylation site (N-linked (GlcNAc...) asparagine; by host). The Proton donor/acceptor role is filled by aspartate 151. Arginine 152 provides a ligand contact to substrate. Asparagine 200 and asparagine 234 each carry an N-linked (GlcNAc...) asparagine; by host glycan. Residue 276–277 coordinates substrate; it reads EE. Arginine 292 is a binding site for substrate. Ca(2+)-binding residues include aspartate 293, glycine 297, and aspartate 324. Arginine 371 is a substrate binding site. Asparagine 402 carries an N-linked (GlcNAc...) asparagine; by host glycan. Tyrosine 406 (nucleophile) is an active-site residue.

The protein belongs to the glycosyl hydrolase 34 family. As to quaternary structure, homotetramer. It depends on Ca(2+) as a cofactor. Post-translationally, N-glycosylated.

The protein localises to the virion membrane. The protein resides in the host apical cell membrane. It carries out the reaction Hydrolysis of alpha-(2-&gt;3)-, alpha-(2-&gt;6)-, alpha-(2-&gt;8)- glycosidic linkages of terminal sialic acid residues in oligosaccharides, glycoproteins, glycolipids, colominic acid and synthetic substrates.. With respect to regulation, inhibited by the neuraminidase inhibitors zanamivir (Relenza) and oseltamivir (Tamiflu). These drugs interfere with the release of progeny virus from infected cells and are effective against all influenza strains. Resistance to neuraminidase inhibitors is quite rare. Catalyzes the removal of terminal sialic acid residues from viral and cellular glycoconjugates. Cleaves off the terminal sialic acids on the glycosylated HA during virus budding to facilitate virus release. Additionally helps virus spread through the circulation by further removing sialic acids from the cell surface. These cleavages prevent self-aggregation and ensure the efficient spread of the progeny virus from cell to cell. Otherwise, infection would be limited to one round of replication. Described as a receptor-destroying enzyme because it cleaves a terminal sialic acid from the cellular receptors. May facilitate viral invasion of the upper airways by cleaving the sialic acid moieties on the mucin of the airway epithelial cells. Likely to plays a role in the budding process through its association with lipid rafts during intracellular transport. May additionally display a raft-association independent effect on budding. Plays a role in the determination of host range restriction on replication and virulence. Sialidase activity in late endosome/lysosome traffic seems to enhance virus replication. The polypeptide is Neuraminidase (Influenza A virus (strain A/Udorn/307/1972 H3N2)).